Reading from the N-terminus, the 155-residue chain is Ribosomal RNA large subunit methyltransferase H (155 aa).

Residues Leu-72, Gly-103, and 122-127 contribute to the S-adenosyl-L-methionine site; that span reads LSPLTL.

Belongs to the RNA methyltransferase RlmH family. In terms of assembly, homodimer.

The protein resides in the cytoplasm. It catalyses the reaction pseudouridine(1915) in 23S rRNA + S-adenosyl-L-methionine = N(3)-methylpseudouridine(1915) in 23S rRNA + S-adenosyl-L-homocysteine + H(+). Its function is as follows. Specifically methylates the pseudouridine at position 1915 (m3Psi1915) in 23S rRNA. This chain is Ribosomal RNA large subunit methyltransferase H, found in Histophilus somni (strain 129Pt) (Haemophilus somnus).